A 6781-amino-acid chain; its full sequence is Replicase polyprotein 1ab (6781 aa).

A CoV Nsp1 globular domain is found at 2-109 (ASNHVTLAFA…ELELTFGRRG (108 aa)). SsDNA contacts are provided by glutamate 59, asparagine 95, glutamate 99, and glutamate 102. Residues 112–364 (IVPVDQYMCG…TKLKFDILSG (253 aa)) enclose the CoV Nsp2 N-terminal domain. The CoV Nsp2 middle domain occupies 383–776 (SALVDIVDDA…AEMYNTYLST (394 aa)). The CoV Nsp2 C-terminal domain maps to 778–895 (VENLVLAGVS…VPICFKKKGG (118 aa)). The Ubiquitin-like 1 domain maps to 896–991 (GDVKFSDEVS…VMVSQWPLND (96 aa)). The disordered stretch occupies residues 1009–1040 (IDSEGDEVDSSAPEKVADVANSEPGDDGLPVA). Positions 1057–1296 (SFIKDTPSTV…EPVVKPFYSY (240 aa)) constitute a Peptidase C16 1 domain. Cysteine 1091 functions as the For PL1-PRO activity in the catalytic mechanism. The segment at 1162–1193 (CGCGTGERIYEGCAFRMTPTLEPFPYGACAQC) adopts a C4-type 1; degenerate zinc-finger fold. Residues histidine 1239 and aspartate 1252 each act as for PL1-PRO activity in the active site. Residues 1297-1465 (KNVDFYQGDF…IFKEALVDTT (169 aa)) form the Macro domain. Residues 1630–1685 (NKSVVIKVTEDTRSVKAVKVESTATYGQQIGPCLVNDTVVTDNKPVVADVVAKVVP) form the Ubiquitin-like 2 domain. The region spanning 1691-1951 (SHYGFDKAGE…LLDTMNYASE (261 aa)) is the Peptidase C16 2 domain. Cysteine 1729 serves as the catalytic For PL2-PRO activity. Residues 1808–1838 (DGCCCSKRVVTAPVVNASVLKLGVEDGLCPH) form a C4-type 2; degenerate zinc finger. Active-site for PL2-PRO activity residues include histidine 1888 and aspartate 1901. The next 2 membrane-spanning stretches (helical) occupy residues 1959-1979 (FMSRNLITVFLYILSILGLCF) and 2022-2042 (WFKVLGKFSLGIYALYALLFM). The tract at residues 1959-2170 (FMSRNLITVF…FGDEIVVFFI (212 aa)) is HD1. The 65-residue stretch at 2038 to 2102 (ALLFMTIRFT…TQVVWQHLRD (65 aa)) folds into the 3Ecto domain. 2 disulfide bridges follow: cysteine 2054/cysteine 2080 and cysteine 2072/cysteine 2077. 3 helical membrane passes run 2105–2125 (IGNVMPFFYLAFLAIFGGVYV), 2127–2147 (AITLYFIFQYLNSLGVFLGLQ), and 2150–2170 (IWFLQLVPFDVFGDEIVVFFI). The interval 2176–2266 (MFIKHVCLGC…VVKLNVQPTG (91 aa)) is Y1. The CoV Nsp3 Y domain maps to 2176 to 2516 (MFIKHVCLGC…PTVCIANKKG (341 aa)). Residues histidine 2180, cysteine 2185, cysteine 2190, cysteine 2193, cysteine 2226, histidine 2229, cysteine 2233, and cysteine 2236 each contribute to the Zn(2+) site. Residues 2180 to 2193 (HVCLGCDKASCVAC) are ZF1. The tract at residues 2226 to 2236 (CKKHNFFCLNC) is ZF2. Residues 2267 to 2356 (PATILIDKVE…LVDSALLASL (90 aa)) form a Y2 region. Residues 2267–2516 (PATILIDKVE…PTVCIANKKG (250 aa)) are coV-Y. Residues 2357-2414 (SVDFGASLHSAFVSVLSNSFGKDLSSCNDMQDCKSTLGFDDVPLDTFNAAVAEAHRYD) are Y3. The segment at 2415–2516 (VLLTDMSFNN…PTVCIANKKG (102 aa)) is Y4. 7 helical membrane passes run 2528–2548 (FFWFLCLFIVAAFFALSFLDF), 2619–2639 (IPAGVYLAGKTLVFAINTIFG), 2654–2674 (GACIFNSACTTLSGLGGTAVY), 2754–2774 (GSDFVCGTGLFTLLMNVISVF), 2787–2807 (ILFNCIIAFVAVAVCFLFTKF), 2814–2834 (MSVGVFTVGACTLLNNVSYIV), and 2863–2883 (LGFLISYILIAPWWVLMVYAF). The HD2 stretch occupies residues 2528–2883 (FFWFLCLFIV…PWWVLMVYAF (356 aa)). Residues 2902-2997 (LFEGDKFVGS…PTVSYNSTLQ (96 aa)) enclose the Nsp4C domain. Residues 2998 to 3299 (AGLRKMAQPS…VRQMYGVNLQ (302 aa)) enclose the Peptidase C30 domain. Active-site for 3CL-PRO activity residues include histidine 3038 and cysteine 3141. A run of 7 helical transmembrane segments spans residues 3336-3356 (GYVTPMFACLSLLSSLLMFTL), 3361-3381 (LFFQVFLIPALIVTSCINLAF), 3399-3419 (LMGFNAQGLVNIFVCFVVTIL), 3431-3451 (PASSVTYVVALLTAAYNYFYA), 3454-3474 (ILSCAMTLFASVTGNWFVGAV), 3476-3496 (YKVAVYMALRFPTFVAIFGDI), and 3500-3520 (MFCYLVLGYFTCCFYGILYWF). The tract at residues 3336–3520 (GYVTPMFACL…CCFYGILYWF (185 aa)) is HD3. Residues 3580–3662 (SKLTDIKCSN…SYFNDNSMLQ (83 aa)) form the RdRp Nsp7 cofactor domain. Residues 3663-3857 (SVASTYVGLP…LGCERIVKLQ (195 aa)) form the RdRp Nsp8 cofactor domain. The Nsp9 ssRNA-binding domain maps to 3858-3965 (NNEIIPGKLK…GYIGATVRLQ (108 aa)). Positions 3966 to 4103 (AGKQTEQAIN…CDRSIMQSTD (138 aa)) constitute an ExoN/MTase coactivator domain. 8 residues coordinate Zn(2+): cysteine 4039, cysteine 4042, histidine 4048, cysteine 4055, cysteine 4081, cysteine 4084, cysteine 4092, and cysteine 4094. Zinc fingers lie at residues 4039-4055 (CLYCRAHVEHPSMDGFC) and 4081-4094 (CKVCGCWLSNGCTC). The NiRAN domain occupies 4106–4355 (YLNRVRGSSA…ASECFVKSDI (250 aa)). The Nsp12 Interface domain maps to 4361–4459 (KSYDLLEYDF…WNNDLNLHSS (99 aa)). Positions 4390, 4396, 4401, 4405, and 4582 each coordinate Zn(2+). The region spanning 4460–5027 (RLSINELLQF…NMYEKSAVLQ (568 aa)) is the Nsp12 RNA-dependent RNA polymerase domain. Residues 4462 to 4676 (SINELLQFCS…HQKHLKSIVN (215 aa)) form a rdRp Fingers N-ter region. The tract at residues 4677–4715 (TRGASVVIGTTKFYGGWDNMLKNLIDGVENPCLMGWDYP) is rdRp Palm N-ter. The RdRp catalytic domain maps to 4707–4869 (PCLMGWDYPK…CYNNDYASLG (163 aa)). The tract at residues 4716 to 4774 (KCDRALPNMIRMISAMILGSKHTTCCSSTDRFFRLCNELAQVLTEVVYSNGGFYLKPGG) is rdRp Fingers C-ter. Zn(2+)-binding residues include histidine 4737, cysteine 4740, and cysteine 4741. The segment at 4775 to 4910 (TTSGDATTAY…NKGPHEFCSQ (136 aa)) is rdRp Palm C-ter. Residues serine 4854, aspartate 4855, and aspartate 4856 each act as for RNA-directed RNA polymerase activity in the active site. Residues 4911–5027 (HTMQIVDKEG…NMYEKSAVLQ (117 aa)) form a rdRp Thumb region. The CV ZBD domain maps to 5028–5140 (SAGLCVVCGS…EDFNRIATSD (113 aa)). Zn(2+) is bound by residues cysteine 5032, cysteine 5035, cysteine 5043, cysteine 5046, cysteine 5053, cysteine 5056, histidine 5060, histidine 5066, cysteine 5077, cysteine 5082, cysteine 5099, and histidine 5102. Residues 5275 to 5466 (STIHKLHPAF…MCALKPDVFL (192 aa)) enclose the (+)RNA virus helicase ATP-binding domain. ATP is bound at residue 5310–5317 (GPPGSGKS). The 170-residue stretch at 5467-5636 (HKCYRCPAEI…EGCGLFKDCS (170 aa)) folds into the (+)RNA virus helicase C-terminal domain. The region spanning 5696 to 5910 (LFCTRDFAMR…RCLAIHDCFV (215 aa)) is the ExoN domain. Residues aspartate 5714, glutamate 5716, and glutamate 5815 each act as for exoribonuclease activity in the active site. Residues cysteine 5831, cysteine 5833, cysteine 5849, histidine 5852, histidine 5880, cysteine 5884, and histidine 5887 each contribute to the Zn(2+) site. Residues histidine 5891 and aspartate 5896 each act as for exoribonuclease activity in the active site. Residue cysteine 5902 coordinates Zn(2+). In terms of domain architecture, N7-MTase spans 5919–6140 (YPFIGNEAVI…NLWQTFSNNL (222 aa)). 5954 to 5960 (DIGNPKG) is a binding site for S-adenosyl-L-methionine. Residues 6031–6045 (CNGGSLYVNNHAFHT) are gpppA-binding. Cysteine 6069, cysteine 6086, cysteine 6097, and histidine 6100 together coordinate Zn(2+). One can recognise a Nsp15 N-terminal oligomerization domain in the interval 6142-6202 (GLENIAFNVL…NVAFELYAKR (61 aa)). An AV-Nsp11N/CoV-Nsp15M domain is found at 6203 to 6320 (KVGLTPPITI…IYTRKNGKFE (118 aa)). The 141-residue stretch at 6337-6477 (SPRSDMEKDF…KDHKLQTFYP (141 aa)) folds into the NendoU domain. Residues histidine 6367, histidine 6382, and lysine 6423 each act as for uridylate-specific endoribonuclease activity in the active site. Positions 6481-6777 (ASEWKCGYSM…AICGFSNHLV (297 aa)) constitute a Nidovirus-type SAM-dependent 2'-O-MTase domain. Catalysis depends on for 2'-O-methyltransferase residues lysine 6525, aspartate 6609, lysine 6649, and glutamate 6682.

The protein belongs to the coronaviruses polyprotein 1ab family. Interacts with PL-PRO and nsp6. In terms of assembly, monomer. Homodimer; disulfide-linked. As to quaternary structure, interacts with nsp8 and nsp12 to form the replication-transcription complex (RTC): nsp12, nsp7, two subunits of nsp8, and up to two subunits of nsp13. Eight copies of nsp7 and eight copies of nsp8 assemble to form a heterohexadecamer dsRNA-encircling ring structure. Interacts with nsp7, nsp13 and nsp12 to form the replication-transcription complex (RTC): nsp12, nsp7, two subunits of nsp8, and up to two subunits of nsp13. Eight copies of nsp7 and eight copies of nsp8 assemble to form a heterohexadecamer dsRNA-encircling ring structure. In terms of assembly, homodimer. As to quaternary structure, forms a dodecamer and interacts with nsp14 and nsp16; these interactions enhance nsp14 and nsp16 enzymatic activities. Mn(2+) is required as a cofactor. In terms of processing, specific enzymatic cleavages in vivo by its own proteases yield mature proteins. 3CL-PRO and PL-PRO proteinases are autocatalytically processed.

The protein localises to the host cytoplasm. It localises to the host nucleus. The protein resides in the host membrane. It is found in the host perinuclear region. Its subcellular location is the host endoplasmic reticulum. The protein localises to the host endoplasmic reticulum-Golgi intermediate compartment. The enzyme catalyses Thiol-dependent hydrolysis of ester, thioester, amide, peptide and isopeptide bonds formed by the C-terminal Gly of ubiquitin (a 76-residue protein attached to proteins as an intracellular targeting signal).. The catalysed reaction is a 5'-end diphospho-ribonucleoside in mRNA + GTP + H(+) = a 5'-end (5'-triphosphoguanosine)-ribonucleoside in mRNA + diphosphate. It catalyses the reaction RNA(n) + a ribonucleoside 5'-triphosphate = RNA(n+1) + diphosphate. It carries out the reaction ATP + H2O = ADP + phosphate + H(+). The enzyme catalyses a 5'-end (5'-triphosphoguanosine)-ribonucleoside in mRNA + S-adenosyl-L-methionine = a 5'-end (N(7)-methyl 5'-triphosphoguanosine)-ribonucleoside in mRNA + S-adenosyl-L-homocysteine. The catalysed reaction is uridylyl-uridylyl-ribonucleotide-RNA = a 3'-end uridylyl-2',3'-cyclophospho-uridine-RNA + a 5'-end dephospho-ribonucleoside-RNA. It catalyses the reaction a 5'-end (N(7)-methyl 5'-triphosphoguanosine)-ribonucleoside in mRNA + S-adenosyl-L-methionine = a 5'-end (N(7)-methyl 5'-triphosphoguanosine)-(2'-O-methyl-ribonucleoside) in mRNA + S-adenosyl-L-homocysteine + H(+). Inhibited by the substrate-analog Cbz-Val-Asn-Ser-Thr-Leu-Gln-CMK. Inhibited by (R)-16. Functionally, multifunctional protein responsible for the transcription of negative stranded RNA, leader RNA, subgenomic mRNAs and progeny virion RNA as well as proteinases responsible for the cleavage of the polyprotein into functional products. Its function is as follows. Plays a role in the inhibition of host interferon and pro-inflammatory cytokines production. Suppresses host RELA/p65 activation by blocking NFKBIA phosphorylation. Targets also the RLR pathway downstream of the IRF3 activation by targeting host CREBBP to proteasomal degradation. Responsible for the cleavages located at the N-terminus of the replicase polyprotein. Participates together with nsp4 in the assembly of virally-induced cytoplasmic double-membrane vesicles necessary for viral replication. Forms a molecular pore spanning the double membrane of the coronavirus replication organelle. In addition, PLP2 possesses a deubiquitinating/deISGylating activity and processes both 'Lys-48'- and 'Lys-63'-linked polyubiquitin chains from cellular substrates. PLP2 also antagonizes innate immune induction of type I interferon by blocking the nuclear translocation of host IRF-3. Participates in the inhibition of the integrated stress response (ISR) in the infected host cell. In terms of biological role, participates in the assembly of virally-induced cytoplasmic double-membrane vesicles necessary for viral replication. Functionally, responsible for the majority of cleavages as it cleaves the C-terminus of replicase polyprotein at 11 sites. Recognizes substrates containing the core sequence [ILMVF]-Q-|-[SGACN]. Also contains an ADP-ribose-1''-phosphate (ADRP)-binding function. Participates in the inhibition of the integrated stress response (ISR) in the infected host cell. Its function is as follows. Plays a role in the initial induction of autophagosomes from host endoplasmic reticulum. Later, limits the expansion of these phagosomes that are no longer able to deliver viral components to lysosomes. Plays a role in viral RNA synthesis. Forms a hexadecamer with nsp8 (8 subunits of each) that may participate in viral replication by acting as a primase. Alternatively, may synthesize substantially longer products than oligonucleotide primers. In terms of biological role, plays a role in viral RNA synthesis. Forms a hexadecamer with nsp7 (8 subunits of each) that may participate in viral replication by acting as a primase. Alternatively, may synthesize substantially longer products than oligonucleotide primers. Functionally, forms a primer, NSP9-pU, which is utilized by the polymerase for the initiation of RNA chains. Interacts with ribosome signal recognition particle RNA (SRP). Together with NSP8, suppress protein integration into the cell membrane, thereby disrupting host immune defenses. Its function is as follows. Plays a pivotal role in viral transcription by stimulating both nsp14 3'-5' exoribonuclease and nsp16 2'-O-methyltransferase activities. Therefore plays an essential role in viral mRNAs cap methylation. RNA-directed RNA polymerase that catalyzes the transcription of viral genomic and subgenomic RNAs. Acts in complex with nsp7 and nsp8 to transcribe both the minus and positive strands of genomic RNA. The kinase-like NiRAN domain of NSP12 attaches one or more nucleotides to the amino terminus of NSP9, forming a covalent RNA-protein intermediate that serves as transcription/replication primer. Subgenomic RNAs (sgRNAs) are formed by discontinuous transcription: The polymerase has the ability to pause at transcription-regulating sequences (TRS) and jump to the leader TRS, resulting in a major deletion. This creates a series of subgenomic RNAs that are replicated, transcribed and translated. In addition, Nsp12 is a subunit of the viral RNA capping enzyme that catalyzes the RNA guanylyltransferase reaction for genomic and sub-genomic RNAs. Subsequently, the NiRAN domain transfers RNA to GDP, and forms the core cap structure GpppA-RNA. In terms of biological role, plays a role in viral RNA synthesis. Multi-functional protein with a zinc-binding domain in N-terminus displaying RNA and DNA duplex-unwinding activities with 5' to 3' polarity. ATPase activity is strongly stimulated by poly(U), poly(dT), poly(C), poly(dA), but not by poly(G). Functionally, plays a role in viral RNA synthesis through two distinct activities. The N7-guanine methyltransferase activity plays a role in the formation of the cap structure GpppA-RNA. The proofreading exoribonuclease reduces the sensitivity of the virus to RNA mutagens during replication. This activity acts on both ssRNA and dsRNA in a 3'-5' direction. Its function is as follows. Plays a role in viral transcription/replication and prevents the simultaneous activation of host cell dsRNA sensors, such as MDA5/IFIH1, OAS, and PKR. Acts by degrading the 5'-polyuridines generated during replication of the poly(A) region of viral genomic and subgenomic RNAs. Catalyzes a two-step reaction in which a 2'3'-cyclic phosphate (2'3'-cP) is first generated by 2'-O transesterification, which is then hydrolyzed to a 3'-phosphate (3'-P). If not degraded, poly(U) RNA would hybridize with poly(A) RNA tails and activate host dsRNA sensors. Decreases the RNA levels and thus the expression of host TBK1 and IRF3, antagonizing the host innate response. This Sus scrofa (Pig) protein is Replicase polyprotein 1ab (rep).